A 482-amino-acid chain; its full sequence is tRNA sulfurtransferase (482 aa).

Residues 61 to 165 (DLVRDALTRI…DDRLLLVRGR (105 aa)) form the THUMP domain. ATP-binding positions include 183–184 (LI), K265, G287, and Q296. An intrachain disulfide couples C344 to C456. In terms of domain architecture, Rhodanese spans 404-482 (LAEGDVVLDI…GYDNVRVYRP (79 aa)). The Cysteine persulfide intermediate role is filled by C456.

Belongs to the ThiI family.

It localises to the cytoplasm. The enzyme catalyses [ThiI sulfur-carrier protein]-S-sulfanyl-L-cysteine + a uridine in tRNA + 2 reduced [2Fe-2S]-[ferredoxin] + ATP + H(+) = [ThiI sulfur-carrier protein]-L-cysteine + a 4-thiouridine in tRNA + 2 oxidized [2Fe-2S]-[ferredoxin] + AMP + diphosphate. It catalyses the reaction [ThiS sulfur-carrier protein]-C-terminal Gly-Gly-AMP + S-sulfanyl-L-cysteinyl-[cysteine desulfurase] + AH2 = [ThiS sulfur-carrier protein]-C-terminal-Gly-aminoethanethioate + L-cysteinyl-[cysteine desulfurase] + A + AMP + 2 H(+). The protein operates within cofactor biosynthesis; thiamine diphosphate biosynthesis. Catalyzes the ATP-dependent transfer of a sulfur to tRNA to produce 4-thiouridine in position 8 of tRNAs, which functions as a near-UV photosensor. Also catalyzes the transfer of sulfur to the sulfur carrier protein ThiS, forming ThiS-thiocarboxylate. This is a step in the synthesis of thiazole, in the thiamine biosynthesis pathway. The sulfur is donated as persulfide by IscS. In Edwardsiella ictaluri (strain 93-146), this protein is tRNA sulfurtransferase.